Consider the following 257-residue polypeptide: Phosphonates import ATP-binding protein PhnC (257 aa).

The 245-residue stretch at 2-246 (IEFRNVSKVY…KFAEIYGDVA (245 aa)) folds into the ABC transporter domain. 35–42 (GLSGAGKS) is an ATP binding site.

Belongs to the ABC transporter superfamily. Phosphonates importer (TC 3.A.1.9.1) family. In terms of assembly, the complex is composed of two ATP-binding proteins (PhnC), two transmembrane proteins (PhnE) and a solute-binding protein (PhnD).

It localises to the cell membrane. The enzyme catalyses phosphonate(out) + ATP + H2O = phosphonate(in) + ADP + phosphate + H(+). Part of the ABC transporter complex PhnCDE involved in phosphonates import. Responsible for energy coupling to the transport system. In Bacillus cereus (strain ZK / E33L), this protein is Phosphonates import ATP-binding protein PhnC.